Reading from the N-terminus, the 427-residue chain is 3-phosphoshikimate 1-carboxyvinyltransferase (427 aa).

3-phosphoshikimate contacts are provided by K22, S23, and R27. K22 contacts phosphoenolpyruvate. The phosphoenolpyruvate site is built by G96 and R124. Residues S170, S171, Q172, S198, D314, N337, and K341 each coordinate 3-phosphoshikimate. Position 172 (Q172) interacts with phosphoenolpyruvate. The active-site Proton acceptor is D314. Residues R345, R387, and K412 each coordinate phosphoenolpyruvate.

Belongs to the EPSP synthase family. In terms of assembly, monomer.

Its subcellular location is the cytoplasm. The enzyme catalyses 3-phosphoshikimate + phosphoenolpyruvate = 5-O-(1-carboxyvinyl)-3-phosphoshikimate + phosphate. Its pathway is metabolic intermediate biosynthesis; chorismate biosynthesis; chorismate from D-erythrose 4-phosphate and phosphoenolpyruvate: step 6/7. In terms of biological role, catalyzes the transfer of the enolpyruvyl moiety of phosphoenolpyruvate (PEP) to the 5-hydroxyl of shikimate-3-phosphate (S3P) to produce enolpyruvyl shikimate-3-phosphate and inorganic phosphate. This chain is 3-phosphoshikimate 1-carboxyvinyltransferase, found in Sulfurovum sp. (strain NBC37-1).